The sequence spans 287 residues: ATP synthase gamma chain (287 aa).

The protein belongs to the ATPase gamma chain family. As to quaternary structure, F-type ATPases have 2 components, CF(1) - the catalytic core - and CF(0) - the membrane proton channel. CF(1) has five subunits: alpha(3), beta(3), gamma(1), delta(1), epsilon(1). CF(0) has three main subunits: a, b and c.

The protein localises to the cell inner membrane. Functionally, produces ATP from ADP in the presence of a proton gradient across the membrane. The gamma chain is believed to be important in regulating ATPase activity and the flow of protons through the CF(0) complex. The sequence is that of ATP synthase gamma chain from Stenotrophomonas maltophilia (strain K279a).